We begin with the raw amino-acid sequence, 230 residues long: tRNA (guanine-N(1)-)-methyltransferase (230 aa).

S-adenosyl-L-methionine contacts are provided by residues Gly114 and 138-143 (IGDYVL).

The protein belongs to the RNA methyltransferase TrmD family. As to quaternary structure, homodimer.

The protein localises to the cytoplasm. The enzyme catalyses guanosine(37) in tRNA + S-adenosyl-L-methionine = N(1)-methylguanosine(37) in tRNA + S-adenosyl-L-homocysteine + H(+). Its function is as follows. Specifically methylates guanosine-37 in various tRNAs. The polypeptide is tRNA (guanine-N(1)-)-methyltransferase (Rhodococcus jostii (strain RHA1)).